Consider the following 424-residue polypeptide: Glutamate-1-semialdehyde 2,1-aminomutase (424 aa).

An N6-(pyridoxal phosphate)lysine modification is found at lysine 260.

The protein belongs to the class-III pyridoxal-phosphate-dependent aminotransferase family. HemL subfamily. Requires pyridoxal 5'-phosphate as cofactor.

It is found in the cytoplasm. It catalyses the reaction (S)-4-amino-5-oxopentanoate = 5-aminolevulinate. It participates in porphyrin-containing compound metabolism; protoporphyrin-IX biosynthesis; 5-aminolevulinate from L-glutamyl-tRNA(Glu): step 2/2. This Nitrosopumilus maritimus (strain SCM1) protein is Glutamate-1-semialdehyde 2,1-aminomutase.